A 129-amino-acid chain; its full sequence is Small ribosomal subunit protein eS6 (129 aa).

The interval 53–88 is disordered; the sequence is TGGSDTSGRPMRPDVRGVTTKEIMSDGGVGFEPTTD.

This sequence belongs to the eukaryotic ribosomal protein eS6 family.

In Haloarcula marismortui (strain ATCC 43049 / DSM 3752 / JCM 8966 / VKM B-1809) (Halobacterium marismortui), this protein is Small ribosomal subunit protein eS6 (rps6e).